A 248-amino-acid chain; its full sequence is Secreted and transmembrane protein 1 (248 aa).

The signal sequence occupies residues 1–28; that stretch reads MQTCPLAFPGHVSQALGTLLFLAASLSA. The Extracellular segment spans residues 29 to 145; that stretch reads QNEGWDSPIC…AEPQSAPDTG (117 aa). C38 and C55 are joined by a disulfide. N-linked (GlcNAc...) asparagine glycosylation is present at N56. A helical membrane pass occupies residues 146 to 166; sequence FWPVPAVVTAVFILLVALVMF. The Cytoplasmic segment spans residues 167–248; the sequence is AWYRCRCSQQ…QPLFPYAADP (82 aa).

Belongs to the SECTM family. Interacts with CD7. In terms of tissue distribution, detected at the highest levels in peripheral blood leukocytes and breast cancer cell lines. Found in leukocytes of the myeloid lineage, with the strongest expression observed in granulocytes and no detectable expression in lymphocytes. Expressed in thymic epithelial cells and fibroblasts.

The protein resides in the cell membrane. Its subcellular location is the secreted. In terms of biological role, may be involved in thymocyte signaling. The sequence is that of Secreted and transmembrane protein 1 (SECTM1) from Homo sapiens (Human).